We begin with the raw amino-acid sequence, 88 residues long: Elongation factor 1-beta (88 aa).

It belongs to the EF-1-beta/EF-1-delta family.

Functionally, promotes the exchange of GDP for GTP in EF-1-alpha/GDP, thus allowing the regeneration of EF-1-alpha/GTP that could then be used to form the ternary complex EF-1-alpha/GTP/AAtRNA. This Natronomonas pharaonis (strain ATCC 35678 / DSM 2160 / CIP 103997 / JCM 8858 / NBRC 14720 / NCIMB 2260 / Gabara) (Halobacterium pharaonis) protein is Elongation factor 1-beta.